The following is a 348-amino-acid chain: UDP-3-O-acylglucosamine N-acyltransferase (348 aa).

The active-site Proton acceptor is His-241.

It belongs to the transferase hexapeptide repeat family. LpxD subfamily. In terms of assembly, homotrimer.

It carries out the reaction a UDP-3-O-[(3R)-3-hydroxyacyl]-alpha-D-glucosamine + a (3R)-hydroxyacyl-[ACP] = a UDP-2-N,3-O-bis[(3R)-3-hydroxyacyl]-alpha-D-glucosamine + holo-[ACP] + H(+). It functions in the pathway bacterial outer membrane biogenesis; LPS lipid A biosynthesis. Catalyzes the N-acylation of UDP-3-O-acylglucosamine using 3-hydroxyacyl-ACP as the acyl donor. Is involved in the biosynthesis of lipid A, a phosphorylated glycolipid that anchors the lipopolysaccharide to the outer membrane of the cell. This chain is UDP-3-O-acylglucosamine N-acyltransferase, found in Neisseria meningitidis serogroup C / serotype 2a (strain ATCC 700532 / DSM 15464 / FAM18).